The sequence spans 198 residues: Na(+)-translocating NADH-quinone reductase subunit E (198 aa).

The next 6 helical transmembrane spans lie at 11-31 (AVFI…FLAV), 39-59 (FGLG…NNLV), 77-97 (FLNF…LEMI), 109-129 (LGIF…VSFM), 140-160 (IVYG…LASI), and 176-196 (LGVT…FSGV).

The protein belongs to the NqrDE/RnfAE family. In terms of assembly, composed of six subunits; NqrA, NqrB, NqrC, NqrD, NqrE and NqrF.

The protein localises to the cell inner membrane. The catalysed reaction is a ubiquinone + n Na(+)(in) + NADH + H(+) = a ubiquinol + n Na(+)(out) + NAD(+). NQR complex catalyzes the reduction of ubiquinone-1 to ubiquinol by two successive reactions, coupled with the transport of Na(+) ions from the cytoplasm to the periplasm. NqrA to NqrE are probably involved in the second step, the conversion of ubisemiquinone to ubiquinol. This is Na(+)-translocating NADH-quinone reductase subunit E from Proteus mirabilis (strain HI4320).